The sequence spans 523 residues: MGLLHSLHAPAAALLWSCLLGLAAAQEAILHASTNGVSSLSKDYCMYYNNNWTRLPSSLENATSLSLMNLTGTALCHLSDIPPDGIRNKAVVVHWGPCHFLEKARIAQEGGAAALLIANNSVLIPSSRNKSTFQNVTVLIAVITQKDFKDMKETLGDDITVKMYSPSWPNFDYTLVVIFVIAVFTVALGGYWSGLIELENMKSVEDAEDRETRKKKDDYLTFSPLTVVVFVVICCIMIVLLYFFYRWLVYVMIAIFCIASSMSLYNCLSALIHRMPCGQCTILCCGKNIKVSLIFLSGLCISVAVVWAVFRNEDRWAWILQDILGIAFCLNLIKTMKLPNFMSCVILLGLLLIYDVFFVFITPFITKNGESIMVELAAGPFENAEKLPVVIRVPKLMGYSVMSVCSVPVSVLGFGDIIVPGLLIAYCRRFDVQTGSSIYYISSTIAYAVGMIITFVVLMVMKTGQPALLYLVPCTLITVSVVAWSRKEMKKFWKGSSYQVMDHLDYSTNEENPVTTDEQIVQQ.

The first 25 residues, 1–25, serve as a signal peptide directing secretion; it reads MGLLHSLHAPAAALLWSCLLGLAAA. Topologically, residues 26 to 175 are lumenal; sequence QEAILHASTN…PSWPNFDYTL (150 aa). N-linked (GlcNAc...) asparagine glycosylation is found at Asn-51, Asn-61, Asn-69, Asn-119, Asn-129, and Asn-135. Positions 70–155 constitute a PA domain; sequence LTGTALCHLS…KDFKDMKETL (86 aa). Residues 176-196 form a helical membrane-spanning segment; it reads VVIFVIAVFTVALGGYWSGLI. At 197–224 the chain is on the cytoplasmic side; sequence ELENMKSVEDAEDRETRKKKDDYLTFSP. The helical transmembrane segment at 225-245 threads the bilayer; the sequence is LTVVVFVVICCIMIVLLYFFY. Over 246 to 247 the chain is Lumenal; that stretch reads RW. Residues 248–268 traverse the membrane as a helical segment; it reads LVYVMIAIFCIASSMSLYNCL. The Cytoplasmic segment spans residues 269 to 288; that stretch reads SALIHRMPCGQCTILCCGKN. The chain crosses the membrane as a helical span at residues 289-309; sequence IKVSLIFLSGLCISVAVVWAV. The Lumenal segment spans residues 310 to 315; it reads FRNEDR. The chain crosses the membrane as a helical span at residues 316–336; sequence WAWILQDILGIAFCLNLIKTM. At 337–344 the chain is on the cytoplasmic side; it reads KLPNFMSC. A helical membrane pass occupies residues 345–365; sequence VILLGLLLIYDVFFVFITPFI. The active site involves Asp-355. Residues 366–403 lie on the Lumenal side of the membrane; sequence TKNGESIMVELAAGPFENAEKLPVVIRVPKLMGYSVMS. Residues 404 to 424 traverse the membrane as a helical segment; the sequence is VCSVPVSVLGFGDIIVPGLLI. The active site involves Asp-416. The Cytoplasmic segment spans residues 425–440; it reads AYCRRFDVQTGSSIYY. Residues 441–461 form a helical membrane-spanning segment; the sequence is ISSTIAYAVGMIITFVVLMVM. Residues 462–463 lie on the Lumenal side of the membrane; sequence KT. A helical transmembrane segment spans residues 464-484; sequence GQPALLYLVPCTLITVSVVAW. The PAL signature appears at 466-468; sequence PAL. The Cytoplasmic portion of the chain corresponds to 485-523; that stretch reads SRKEMKKFWKGSSYQVMDHLDYSTNEENPVTTDEQIVQQ. The YXXo lysosomal targeting motif motif lies at 498–501; sequence YQVM.

The protein belongs to the peptidase A22B family. Interacts with ITM2B. In terms of processing, glycosylated.

The protein resides in the late endosome membrane. It localises to the lysosome membrane. The protein localises to the membrane. Intramembrane-cleaving aspartic protease (I-CLiP) that cleaves type II membrane signal peptides in the hydrophobic plane of the membrane. Functions in FASLG, ITM2B and TNF processing. Catalyzes the intramembrane cleavage of the anchored fragment of shed TNF-alpha (TNF), which promotes the release of the intracellular domain (ICD) for signaling to the nucleus. Also responsible for the intramembrane cleavage of Fas antigen ligand FASLG, which promotes the release of the intracellular FasL domain (FasL ICD). Essential for degradation of the invariant chain CD74 that plays a central role in the function of antigen-presenting cells in the immune system. Plays a role in the regulation of innate and adaptive immunity. In Mus musculus (Mouse), this protein is Signal peptide peptidase-like 2A.